Reading from the N-terminus, the 152-residue chain is Ribonuclease H (152 aa).

In terms of domain architecture, RNase H type-1 spans 1–142 (MGSKVVIYTD…ADKLAVQGRE (142 aa)). Residues Asp10, Glu48, Asp70, and Asp134 each coordinate Mg(2+).

This sequence belongs to the RNase H family. In terms of assembly, monomer. The cofactor is Mg(2+).

The protein localises to the cytoplasm. The catalysed reaction is Endonucleolytic cleavage to 5'-phosphomonoester.. Functionally, endonuclease that specifically degrades the RNA of RNA-DNA hybrids. The chain is Ribonuclease H from Rickettsia massiliae (strain Mtu5).